Reading from the N-terminus, the 370-residue chain is Succinoglycan biosynthesis protein ExoH (370 aa).

The next 10 membrane-spanning stretches (helical) occupy residues 14 to 34 (ILLISGIVFVHVPYNPQWSPF), 46 to 66 (VFLGESLFRIGVPCLSAISGY), 88 to 108 (TVLLPFLIWSGSFFVVVYAIQ), 144 to 164 (LYFLRDLMLCILLSPLLALLV), 170 to 190 (VTLLALLAYAILPLPNGIFLK), 193 to 213 (ILFGFSAGIYASLHGVNIKML), 216 to 236 (FAAPIAAGFLAIAVVIAVGLY), 244 to 264 (LWLDMALRLTSIAGIIGSWAI), 282 to 302 (GLSFWIFCGHYPLLVLFWMIW), and 307 to 327 (LSYYPLFYFTAPFIAIAILVA). Positions 350–370 (AKRMATQPPQGAQAGYSPQQR) are disordered.

The protein belongs to the acyltransferase 3 family.

It localises to the cell membrane. It functions in the pathway glycan metabolism; exopolysaccharide biosynthesis. In terms of biological role, required for the succinyl modification of the seventh sugar (glucose) of the octasaccharide subunit of succinoglycan (EPS I). This chain is Succinoglycan biosynthesis protein ExoH (exoH), found in Rhizobium meliloti (strain 1021) (Ensifer meliloti).